Reading from the N-terminus, the 1022-residue chain is MATMLSKELQDIESILALNPRVKSHANVHSTASKKNEKKHWKRNPERSCDSCVNLENNFDDIKHTTLSERGALREALRCLKCADAPCQKSCPTNLDIKSFITSISNKNYYGAAKAILSDNPLGLTCGMVCPTSDLCVGGCNLYASEEGPINIGGLQQFATEVFSKMGIPQIRNPELPTADNMPKSFHTRIALIGCGPASISCASFLARLGYDNITIFEKQKYIGGLSTSEIPQFRLPYEVVQFEIDLMKDLGVKVVLEKGLGQNGLTLTSLKEEGYQVVYIGIGLPQANRDKIFEGLTTEQGFYTSKDFLPLVAKASKIGMCNCRSQLPKLHGNVIVLGAGDTAFDCATSALRCGARRVFVVFRKGFTNIRAVPEEMEAAKEEKCEFLPFLSPHEVIKKNGRVSGLRFCRTEQQDDGTWIVDEEQIVHLKADFIISAFGSMLNDPAVTKALDPIKLNRWGTPEVNSETMQTTEPWVFAGGDIAGFANTTVESVNDGKQASWHIHKYIQSLHGNTISATPRLPLFHCSIDTVDISVEMCGIKFPNPFGLASAPPTTSAAMIRRAFEQGWGFALTKTFGLDKDLVTNVSPRIVRGTTSGHIFGPGQGSFLNIELISEKTAAYWCKSVAELKADFPKNIIIASIMCSYNQADWTELAKMAQESQADALELNLSCPHGMGERGMGLACGQDPELVRNICRWVRKATSIPFFAKLTPNVTNIVDIATAAYEGGADGVTATNTVSGLMALKADATPWPGIGRGARTTYGGVSGNAIRPIALRAVSAIARALPGFPILATGGIDSAESGLQFLHAGASVLQVCSAVQNQDFTVIEDYCLGLKALLYLKSIEELHDWDGQSPPTIRHQKGKPVPHVSELIGKSLPSFGPYLQTKTQALAKYKKDASGDVIMDTGAARVNIPKKPIPNVKDVIARALKHIGAYQELDNTEQVQALVDPEMCINCGKCYMTCNDSGYQAIKFDPETHLPVITDSCTGCTLCLSVCPIIDCIKMVSRTTPYEPKRGLPVNPVC.

Positions A26–P45 are disordered. One can recognise a 4Fe-4S ferredoxin-type 1 domain in the interval E69–F100. Residues C79, C82, C87, and C91 each contribute to the [4Fe-4S] cluster site. An FAD-binding site is contributed by V129. C130, C136, C140, and Q156 together coordinate [4Fe-4S] cluster. FAD is bound by residues G194–A198, E218–L226, R235, and L261. Residues A340–T343, R364–K365, R371, A437–G439, and D481–N487 each bind NADP(+). FAD is bound at residue G480–T489. FMN contacts are provided by residues S550 and K574–T575. Substrate-binding positions include N609 and N668 to S670. The active-site Proton acceptor is C671. FMN is bound at residue K709. Position 736–737 (N736–T737) interacts with substrate. FMN-binding positions include G767, T793–G795, and C816–S817. 4Fe-4S ferredoxin-type domains lie at V943–E975 and T976–R1006. [4Fe-4S] cluster is bound by residues C952, C955, C958, C962, C985, C988, C991, and C995.

It belongs to the dihydropyrimidine dehydrogenase family. In terms of assembly, homodimer. Requires FAD as cofactor. FMN serves as cofactor. The cofactor is [4Fe-4S] cluster.

The protein localises to the cytoplasm. The enzyme catalyses 5,6-dihydrouracil + NADP(+) = uracil + NADPH + H(+). It carries out the reaction 5,6-dihydrothymine + NADP(+) = thymine + NADPH + H(+). It functions in the pathway amino-acid biosynthesis; beta-alanine biosynthesis. Involved in pyrimidine base degradation. Catalyzes the reduction of uracil and thymine. Also involved the degradation of the chemotherapeutic drug 5-fluorouracil. In Danio rerio (Zebrafish), this protein is Dihydropyrimidine dehydrogenase [NADP(+)] (dpyd).